We begin with the raw amino-acid sequence, 166 residues long: PR-toxin biosynthesis cluster protein 10 (166 aa).

Its function is as follows. Part of the gene cluster that mediates the biosynthesis of PR-toxin, a bicyclic sesquiterpene belonging to the eremophilane class and acting as a mycotoxin. The first step of the pathway is catalyzed by the aristolochene synthase which performs the cyclization of trans,trans-farnesyl diphosphate (FPP) to the bicyclic sesquiterpene aristolochene. Following the formation of aristolochene, the non-oxygenated aristolochene is converted to the trioxygenated intermediate eremofortin B, via 7-epi-neopetasone. This conversion appears to involve three enzymes, a hydroxysterol oxidase-like enzyme, the quinone-oxidase prx3 that forms the quinone-type-structure in the bicyclic nucleus of aristolochene with the C8-oxo group and the C-3 hydroxyl group, and the P450 monooxygenase prx9 that introduces the epoxide at the double bond between carbons 1 and 2. No monoxy or dioxy-intermediates have been reported to be released to the broth, so these three early oxidative reactions may be coupled together. Eremofortin B is further oxidized by another P450 monooxygenase, that introduces a second epoxide between carbons 7 and 11 prior to acetylation to eremofortin A by the acetyltransferase prx11. The second epoxidation may be performed by a second P450 monooxygenase. After the acetylation step, eremofortin A is converted to eremofortin C and then to PR-toxin. First the conversion of eremofortin A to eremofortin C proceeds by oxidation of the side chain of the molecule at C-12 and is catalyzed by the short-chain oxidoreductase prx1. The cytochrome P450 monooxygenase prx8 also plays a role in this step. The primary alcohol formed at C-12 is finally oxidized by the short-chain alcohol dehydrogenase prx4 that forms PR-toxin. This chain is PR-toxin biosynthesis cluster protein 10, found in Penicillium rubens (strain ATCC 28089 / DSM 1075 / NRRL 1951 / Wisconsin 54-1255) (Penicillium chrysogenum).